A 117-amino-acid polypeptide reads, in one-letter code: Transcription elongation factor A protein-like 8 (117 aa).

Basic and acidic residues-rich tracts occupy residues Met1–Leu24 and Tyr61–Glu74. Residues Met1–Glu74 form a disordered region. Positions Glu73–His100 form a coiled coil.

The protein belongs to the TFS-II family. TFA subfamily.

The protein localises to the nucleus. In terms of biological role, may be involved in transcriptional regulation. The polypeptide is Transcription elongation factor A protein-like 8 (TCEAL8) (Bos taurus (Bovine)).